We begin with the raw amino-acid sequence, 364 residues long: Deoxyribonuclease-2-alpha (364 aa).

The signal sequence occupies residues 1-21 (MATLSPLLLAALLWVPVGTLT). The cysteines at positions 22 and 161 are disulfide-linked. N72, N88, N171, N214, N268, and N292 each carry an N-linked (GlcNAc...) asparagine glycan. 2 disulfide bridges follow: C269/C349 and C310/C329. Residue H297 is part of the active site.

Belongs to the DNase II family.

The protein localises to the lysosome. The enzyme catalyses Endonucleolytic cleavage to nucleoside 3'-phosphates and 3'-phosphooligonucleotide end-products.. Functionally, hydrolyzes DNA under acidic conditions with a preference for double-stranded DNA. Plays a major role in the clearance of nucleic acids generated through apoptosis, hence preventing autoinflammation. Necessary for proper fetal development and for definitive erythropoiesis in fetal liver and bone marrow, where it degrades nuclear DNA expelled from erythroid precursor cells. In Sus scrofa (Pig), this protein is Deoxyribonuclease-2-alpha (DNASE2).